The chain runs to 506 residues: NAD(P)H-quinone oxidoreductase chain 4, chloroplastic (506 aa).

Transmembrane regions (helical) follow at residues 5–25, 35–55, 88–108, 114–134, 135–155, 168–188, 209–229, 243–263, 275–295, 309–329, 331–351, 386–406, 415–435, and 463–483; these read FPLL…IPFL, WYTL…FIYK, MPLI…AWPI, LFYF…LSQD, ILLF…LLSL, FILY…TMAF, ALEI…LPAF, HYST…YGLI, VIFS…GALT, SSIS…DLGL, GAMM…FLAG, SLAL…LGFL, FIAL…IYLL, and IFIM…PNLT.

This sequence belongs to the complex I subunit 4 family.

Its subcellular location is the plastid. The protein localises to the chloroplast thylakoid membrane. The catalysed reaction is a plastoquinone + NADH + (n+1) H(+)(in) = a plastoquinol + NAD(+) + n H(+)(out). It catalyses the reaction a plastoquinone + NADPH + (n+1) H(+)(in) = a plastoquinol + NADP(+) + n H(+)(out). In Chaetosphaeridium globosum (Charophycean green alga), this protein is NAD(P)H-quinone oxidoreductase chain 4, chloroplastic.